A 213-amino-acid polypeptide reads, in one-letter code: UPF0301 protein Aave_0907 (213 aa).

The disordered stretch occupies residues 93 to 120 (MGPSSGKQAAGEGGAQAEGEGAEESAYA).

It belongs to the UPF0301 (AlgH) family.

In Paracidovorax citrulli (strain AAC00-1) (Acidovorax citrulli), this protein is UPF0301 protein Aave_0907.